Consider the following 543-residue polypeptide: Dipeptide-binding protein DppE (543 aa).

Positions methionine 1–glycine 22 are cleaved as a signal peptide. Residue cysteine 23 is the site of N-palmitoyl cysteine attachment. Residue cysteine 23 is the site of S-diacylglycerol cysteine attachment.

This sequence belongs to the bacterial solute-binding protein 5 family.

It is found in the cell membrane. In terms of biological role, probably part of the ABC transporter DppBCDE involved in dipeptide transport. This chain is Dipeptide-binding protein DppE (dppE), found in Bacillus subtilis (strain 168).